The following is a 269-amino-acid chain: Putative pyruvate, phosphate dikinase regulatory protein (269 aa).

Residue 147–154 coordinates ADP; sequence GVSRSSKT.

It belongs to the pyruvate, phosphate/water dikinase regulatory protein family. PDRP subfamily.

The enzyme catalyses N(tele)-phospho-L-histidyl/L-threonyl-[pyruvate, phosphate dikinase] + ADP = N(tele)-phospho-L-histidyl/O-phospho-L-threonyl-[pyruvate, phosphate dikinase] + AMP + H(+). It catalyses the reaction N(tele)-phospho-L-histidyl/O-phospho-L-threonyl-[pyruvate, phosphate dikinase] + phosphate + H(+) = N(tele)-phospho-L-histidyl/L-threonyl-[pyruvate, phosphate dikinase] + diphosphate. Its function is as follows. Bifunctional serine/threonine kinase and phosphorylase involved in the regulation of the pyruvate, phosphate dikinase (PPDK) by catalyzing its phosphorylation/dephosphorylation. This Trichlorobacter lovleyi (strain ATCC BAA-1151 / DSM 17278 / SZ) (Geobacter lovleyi) protein is Putative pyruvate, phosphate dikinase regulatory protein.